The chain runs to 268 residues: Tryptophan synthase alpha chain (268 aa).

Active-site proton acceptor residues include Glu-49 and Asp-60.

Belongs to the TrpA family. In terms of assembly, tetramer of two alpha and two beta chains.

It catalyses the reaction (1S,2R)-1-C-(indol-3-yl)glycerol 3-phosphate + L-serine = D-glyceraldehyde 3-phosphate + L-tryptophan + H2O. Its pathway is amino-acid biosynthesis; L-tryptophan biosynthesis; L-tryptophan from chorismate: step 5/5. In terms of biological role, the alpha subunit is responsible for the aldol cleavage of indoleglycerol phosphate to indole and glyceraldehyde 3-phosphate. This Shigella flexneri serotype 5b (strain 8401) protein is Tryptophan synthase alpha chain.